The chain runs to 212 residues: ATP-dependent Clp protease proteolytic subunit (212 aa).

The active-site Nucleophile is serine 114. Histidine 139 is an active-site residue.

It belongs to the peptidase S14 family. As to quaternary structure, fourteen ClpP subunits assemble into 2 heptameric rings which stack back to back to give a disk-like structure with a central cavity, resembling the structure of eukaryotic proteasomes.

It localises to the cytoplasm. The catalysed reaction is Hydrolysis of proteins to small peptides in the presence of ATP and magnesium. alpha-casein is the usual test substrate. In the absence of ATP, only oligopeptides shorter than five residues are hydrolyzed (such as succinyl-Leu-Tyr-|-NHMec, and Leu-Tyr-Leu-|-Tyr-Trp, in which cleavage of the -Tyr-|-Leu- and -Tyr-|-Trp bonds also occurs).. Cleaves peptides in various proteins in a process that requires ATP hydrolysis. Has a chymotrypsin-like activity. Plays a major role in the degradation of misfolded proteins. The protein is ATP-dependent Clp protease proteolytic subunit of Laribacter hongkongensis (strain HLHK9).